The following is a 258-amino-acid chain: Acyl-[acyl-carrier-protein]--UDP-N-acetylglucosamine O-acyltransferase (258 aa).

Belongs to the transferase hexapeptide repeat family. LpxA subfamily. In terms of assembly, homotrimer.

The protein resides in the cytoplasm. It catalyses the reaction a (3R)-hydroxyacyl-[ACP] + UDP-N-acetyl-alpha-D-glucosamine = a UDP-3-O-[(3R)-3-hydroxyacyl]-N-acetyl-alpha-D-glucosamine + holo-[ACP]. The protein operates within glycolipid biosynthesis; lipid IV(A) biosynthesis; lipid IV(A) from (3R)-3-hydroxytetradecanoyl-[acyl-carrier-protein] and UDP-N-acetyl-alpha-D-glucosamine: step 1/6. Functionally, involved in the biosynthesis of lipid A, a phosphorylated glycolipid that anchors the lipopolysaccharide to the outer membrane of the cell. This Pseudomonas syringae pv. tomato (strain ATCC BAA-871 / DC3000) protein is Acyl-[acyl-carrier-protein]--UDP-N-acetylglucosamine O-acyltransferase.